A 67-amino-acid chain; its full sequence is Large ribosomal subunit protein bL35 (67 aa).

Positions 1–16 (MPKMKTKSGAKKRFRV) are enriched in basic residues. The interval 1–24 (MPKMKTKSGAKKRFRVRPGGTVKR) is disordered.

This sequence belongs to the bacterial ribosomal protein bL35 family.

In Polaromonas naphthalenivorans (strain CJ2), this protein is Large ribosomal subunit protein bL35.